The chain runs to 556 residues: Solute carrier family 22 member 20 (556 aa).

Residues 1–15 (MAFTDLLDALGGVGR) are Cytoplasmic-facing. A helical membrane pass occupies residues 16–36 (FQLVYTALLLLPCGLLACHTF). Residues 37–137 (LQNFTAAAPP…LVCEARTLRD (101 aa)) lie on the Extracellular side of the membrane. Asn39, Asn54, Asn61, and Asn96 each carry an N-linked (GlcNAc...) asparagine glycan. Residues 138–158 (LAQSIYMSGVLVGAALFGGLA) form a helical membrane-spanning segment. The Cytoplasmic portion of the chain corresponds to 159–166 (DRLGRKAP). The chain crosses the membrane as a helical span at residues 167 to 187 (LVWSYLQLAVSGAATAYVGSF). The Extracellular segment spans residues 188-194 (SAYCVFR). A helical transmembrane segment spans residues 195 to 215 (FLMGMTFSGIILNSLSLVVEW). Over 216-225 (MPTRGRTVAG) the chain is Cytoplasmic. A helical transmembrane segment spans residues 226 to 246 (ILLGFSFTLGQLILAGVAYLI). At 247-250 (RPWR) the chain is on the extracellular side. The helical transmembrane segment at 251–271 (WLQFAVSAPFLVFFLYSWWLP) threads the bilayer. The Cytoplasmic segment spans residues 272–339 (ESSRWLLLHG…DLFRTPAIRR (68 aa)). Residues 340-360 (VTCCLMGVWFSNSVAYYGLAM) form a helical membrane-spanning segment. The Extracellular segment spans residues 361–366 (DLQKFG). A helical membrane pass occupies residues 367–387 (LSIYLVQALFGIIDIPAMLVA). The Cytoplasmic portion of the chain corresponds to 388 to 397 (TTTMIYVGRR). Residues 398 to 418 (ATVSSFLILAGLMVIANMFMP) form a helical membrane-spanning segment. Over 419-425 (EDLQTLR) the chain is Extracellular. A helical transmembrane segment spans residues 426-446 (TVQAALGKGCLASSFICVYLF). Over 447–457 (TGELYPTEIRQ) the chain is Cytoplasmic. The helical transmembrane segment at 458-478 (MGMGFASVNARLGGLVAPLIT) threads the bilayer. Residues 479-485 (TLGEISP) are Extracellular-facing. A helical membrane pass occupies residues 486–506 (VLPPVSFGATSVLAGMAVACF). At 507–556 (LTETRNVPLVETIAAMERRVKQGRSKRDTEQKSEEISLQQLGASPLKETI) the chain is on the cytoplasmic side. A compositionally biased stretch (basic and acidic residues) spans 526-541 (VKQGRSKRDTEQKSEE). Residues 526-556 (VKQGRSKRDTEQKSEEISLQQLGASPLKETI) are disordered.

It belongs to the major facilitator (TC 2.A.1) superfamily. Organic cation transporter (TC 2.A.1.19) family. Highly expressed in olfactory mucosa. Weakly expressed in testis. Not detected in heart, spleen, lung, kidney or brain.

It localises to the membrane. In terms of biological role, organic anion transporter that mediates the uptake of estrone sulfate. Inhibited by probenecid, propionate, 2-methylbutyrate, 3-methylbutyrate, benzoate, heptanoate and 2-ethylhaxanoate. May act as an odorant transporter. This is Solute carrier family 22 member 20 (Slc22a20) from Mus musculus (Mouse).